The following is a 409-amino-acid chain: Peptidase T (409 aa).

Histidine 80 contacts Zn(2+). The active site involves aspartate 82. Aspartate 143 is a binding site for Zn(2+). Glutamate 177 acts as the Proton acceptor in catalysis. Zn(2+) contacts are provided by glutamate 178, aspartate 200, and histidine 382.

The protein belongs to the peptidase M20B family. Zn(2+) is required as a cofactor.

The protein localises to the cytoplasm. It catalyses the reaction Release of the N-terminal residue from a tripeptide.. Its function is as follows. Cleaves the N-terminal amino acid of tripeptides. The protein is Peptidase T of Enterococcus faecalis (strain ATCC 700802 / V583).